The sequence spans 464 residues: Protein VAPYRIN-LIKE (464 aa).

The MSP domain maps to 3–124 (RLVKTEFNEV…RDAVITVILV (122 aa)). ANK repeat units follow at residues 153–182 (NLTN…DVNF), 186–215 (NGKS…RIND), 217–246 (VDFV…ELDV), 252–281 (EMMT…NANA), 285–314 (RRWT…VKYA), 318–347 (NGKT…LLQA), 349–368 (RVDD…EVNR), 372–401 (NGWT…EVDS), and 405–435 (AGYT…QTNL).

In terms of tissue distribution, expressed in roots.

The protein localises to the cytoplasm. Its subcellular location is the nucleus. It localises to the cell membrane. Its function is as follows. May be involved in arbuscular mycorrhizal (AM) symbiosis with AM fungi and in nitrogen-fixing rhizobial bacteria symbiosis leading to the formation of root nodules. This is Protein VAPYRIN-LIKE from Medicago truncatula (Barrel medic).